Reading from the N-terminus, the 90-residue chain is Acyl-CoA-binding protein (90 aa).

A compositionally biased stretch (basic and acidic residues) spans 1-16 (MGLKEDFEEHAEKAKT). The segment at 1 to 20 (MGLKEDFEEHAEKAKTLPEN) is disordered. The ACB domain maps to 3 to 88 (LKEDFEEHAE…VKQLLGEAAA (86 aa)). An acyl-CoA contacts are provided by residues 30 to 34 (YGLYK), Lys56, and Tyr75.

Belongs to the ACBP family.

Its function is as follows. Binds medium- and long-chain acyl-CoA esters with very high affinity and may function as an intracellular carrier of acyl-CoA esters. The polypeptide is Acyl-CoA-binding protein (Ricinus communis (Castor bean)).